The primary structure comprises 146 residues: Angiogenin (146 aa).

The first 24 residues, 1-24 (MVMGLGLFLLVFMLGLGLTPPTLA), serve as a signal peptide directing secretion. Q25 is modified (pyrrolidone carboxylic acid). Catalysis depends on H37, which acts as the Proton acceptor. Residue R45 coordinates tRNA. 3 cysteine pairs are disulfide-bonded: C50–C105, C63–C116, and C81–C131. A Nucleolar localization signal motif is present at residues 55–59 (RRRHL). TRNA contacts are provided by C105 and I127. The active-site Proton donor is H138.

Belongs to the pancreatic ribonuclease family. In terms of assembly, homodimer. Interacts with RNH1; inhibiting ANG ribonuclease activity. Interacts with PCNA.

Its subcellular location is the secreted. It is found in the nucleus. The protein localises to the nucleolus. The protein resides in the cytoplasm. It localises to the stress granule. Has weak tRNA ribonuclease activity by itself due to partial autoinhibition by its C-terminus, which folds into a short alpha-helix that partially occludes the substrate-binding site. In absence of stress, the ribonuclease activity is inhibited by RNH1 in the cytoplasm. In response to stress, dissociates from RNH1 in the cytoplasm and associates with cytoplasmic ribosomes with vacant A-sites: ribosomes directly activate the tRNA ribonuclease activity of ANG by refolding the C-terminal alpha-helix. In response to stress, the angiogenic activity of ANG is inhibited by RNH1 in the nucleus. In terms of biological role, secreted ribonuclease that can either promote or restrict cell proliferation of target cells, depending on the context. Endocytosed in target cells via its receptor PLXNB2 and translocates to the cytoplasm or nucleus. Under stress conditions, localizes to the cytoplasm and promotes the assembly of stress granules (SGs): specifically cleaves a subset of tRNAs within anticodon loops to produce tRNA-derived stress-induced fragments (tiRNAs), resulting in translation repression and inhibition of cell proliferation. tiRNas also prevent formation of apoptosome, thereby promoting cell survival. Preferentially cleaves RNAs between a pyrimidine and an adenosine residue, suggesting that it cleaves the anticodon loop of tRNA(Ala) (32-UUAGCAU-38) after positions 33 and 36. Cleaves a subset of tRNAs, including tRNA(Ala), tRNA(Glu), tRNA(Gly), tRNA(Lys), tRNA(Val), tRNA(His), tRNA(Asp) and tRNA(Sec). Under growth conditions and in differentiated cells, translocates to the nucleus and stimulates ribosomal RNA (rRNA) transcription, including that containing the initiation site sequences of 45S rRNA, thereby promoting cell growth and proliferation. Angiogenin induces vascularization of normal and malignant tissues via its ability to promote rRNA transcription. Involved in hematopoietic stem and progenitor cell (HSPC) growth and survival by promoting rRNA transcription in growth conditions and inhibiting translation in response to stress, respectively. Mediates the crosstalk between myeloid and intestinal epithelial cells to protect the intestinal epithelial barrier integrity: secreted by myeloid cells and promotes intestinal epithelial cells proliferation and survival. Also mediates osteoclast-endothelial cell crosstalk in growing bone: produced by osteoclasts and protects the neighboring vascular cells against senescence by promoting rRNA transcription. In Macaca mulatta (Rhesus macaque), this protein is Angiogenin (ANG).